We begin with the raw amino-acid sequence, 308 residues long: Ornithine carbamoyltransferase (308 aa).

Residues S56–T59, Q83, R107, and H134–Q137 contribute to the carbamoyl phosphate site. Residues N165, D225, and S229 to M230 each bind L-ornithine. Carbamoyl phosphate is bound by residues C264–L265 and R292.

It belongs to the aspartate/ornithine carbamoyltransferase superfamily. OTCase family.

The protein localises to the cytoplasm. The enzyme catalyses carbamoyl phosphate + L-ornithine = L-citrulline + phosphate + H(+). It functions in the pathway amino-acid biosynthesis; L-arginine biosynthesis; L-arginine from L-ornithine and carbamoyl phosphate: step 1/3. Reversibly catalyzes the transfer of the carbamoyl group from carbamoyl phosphate (CP) to the N(epsilon) atom of ornithine (ORN) to produce L-citrulline. The protein is Ornithine carbamoyltransferase of Nitrobacter winogradskyi (strain ATCC 25391 / DSM 10237 / CIP 104748 / NCIMB 11846 / Nb-255).